A 257-amino-acid polypeptide reads, in one-letter code: Spindlin-2C (257 aa).

Residues 1–47 (MKTPHKKGAAKEQMGEGVGHHIGSTTIKKKKASQKRQRSRSSSRRSI) form a disordered region. Basic residues predominate over residues 27-43 (IKKKKASQKRQRSRSSS). 3 tudor-like domain regions span residues 48 to 97 (VGCR…LELH), 127 to 176 (IGKA…YQLL), and 208 to 253 (IGKH…YDLV). 2 histone H3K4me3 and H3R8me2a binding regions span residues glutamate 136 and 244–246 (DFH).

It belongs to the SPIN/STSY family. Interacts with C11orf84/SPINDOC.

Its subcellular location is the nucleus. In terms of biological role, may be involved in the regulation of cell cycle progression. Exhibits H3K4me3-binding activity. The sequence is that of Spindlin-2C (Spin2c) from Mus musculus (Mouse).